A 317-amino-acid chain; its full sequence is Olfactory receptor 2F1 (317 aa).

Over 1–24 (MGTDNQTWVSEFILLGLSSDWDTR) the chain is Extracellular. N5 is a glycosylation site (N-linked (GlcNAc...) asparagine). The helical transmembrane segment at 25 to 48 (VSLFVLFLVMYVVTVLGNCLIVLL) threads the bilayer. Residues 49 to 57 (IRLDSRLHT) are Cytoplasmic-facing. A helical membrane pass occupies residues 58-79 (PMYFFLTNLSLVDVSYATSVVP). The Extracellular portion of the chain corresponds to 80-100 (QLLAHFLAEHKAIPFQSCAAQ). A disulfide bond links C97 and C189. The chain crosses the membrane as a helical span at residues 101–120 (LFFSLALGGIEFVLLAVMAY). The Cytoplasmic segment spans residues 121-139 (DRYVAVCDALRYSAIMHGG). The helical transmembrane segment at 140 to 160 (LCARLAITSWVSGFISSPVQT) threads the bilayer. At 161 to 200 (AITFQLPMCRNKFIDHISCELLAVVRLACVDTSSNEVTIM) the chain is on the extracellular side. Residues 201–222 (VSSIVLLMTPFCLVLLSYIQII) form a helical membrane-spanning segment. The Cytoplasmic portion of the chain corresponds to 223–236 (STILKIQSREGRKK). Residues 237–261 (AFHTCASHLTVVALCYGVAIFTYIQ) traverse the membrane as a helical segment. The Extracellular portion of the chain corresponds to 262-272 (PHSSPSVLQEK). A helical membrane pass occupies residues 273 to 292 (LFSVFYAILTPMLNPMIYSL). The Cytoplasmic segment spans residues 293 to 317 (RNKEVKGAWQKLLWKFSGLTSKLAT).

Belongs to the G-protein coupled receptor 1 family.

The protein localises to the cell membrane. Its function is as follows. Odorant receptor. In Homo sapiens (Human), this protein is Olfactory receptor 2F1 (OR2F1).